The following is a 51-amino-acid chain: Small ribosomal subunit protein eS31 (51 aa).

Zn(2+) is bound by residues Cys-21, Cys-24, Cys-39, and Cys-42. The C4-type zinc-finger motif lies at 21–42; it reads CVRCSNGVFMADHGDRYACGKC.

It belongs to the eukaryotic ribosomal protein eS31 family. Part of the 30S ribosomal subunit. Zn(2+) is required as a cofactor.

This chain is Small ribosomal subunit protein eS31, found in Methanothermobacter thermautotrophicus (strain ATCC 29096 / DSM 1053 / JCM 10044 / NBRC 100330 / Delta H) (Methanobacterium thermoautotrophicum).